The sequence spans 241 residues: Small ribosomal subunit protein uS3 (241 aa).

A KH type-2 domain is found at 22–91 (VDEYLAYKFH…NPQVTVVKVE (70 aa)). The interval 218–241 (EMQQTQPEAPTLEETVEQSGGETQ) is disordered.

The protein belongs to the universal ribosomal protein uS3 family. As to quaternary structure, part of the 30S ribosomal subunit.

In terms of biological role, binds the lower part of the 30S subunit head. The chain is Small ribosomal subunit protein uS3 from Ignicoccus hospitalis (strain KIN4/I / DSM 18386 / JCM 14125).